A 506-amino-acid chain; its full sequence is Histidine ammonia-lyase (506 aa).

Residues 143-145 (ASG) constitute a cross-link (5-imidazolinone (Ala-Gly)). S144 carries the post-translational modification 2,3-didehydroalanine (Ser).

Belongs to the PAL/histidase family. In terms of processing, contains an active site 4-methylidene-imidazol-5-one (MIO), which is formed autocatalytically by cyclization and dehydration of residues Ala-Ser-Gly.

It is found in the cytoplasm. It catalyses the reaction L-histidine = trans-urocanate + NH4(+). It participates in amino-acid degradation; L-histidine degradation into L-glutamate; N-formimidoyl-L-glutamate from L-histidine: step 1/3. In Salmonella paratyphi A (strain ATCC 9150 / SARB42), this protein is Histidine ammonia-lyase.